The chain runs to 89 residues: Large ribosomal subunit protein bL27 (89 aa).

Residues 1–26 form a disordered region; that stretch reads MAHKKAGGSSKNGRDSNAQRRGVKRF.

Belongs to the bacterial ribosomal protein bL27 family.

The polypeptide is Large ribosomal subunit protein bL27 (Maridesulfovibrio salexigens (strain ATCC 14822 / DSM 2638 / NCIMB 8403 / VKM B-1763) (Desulfovibrio salexigens)).